A 476-amino-acid chain; its full sequence is Aspartyl/glutamyl-tRNA(Asn/Gln) amidotransferase subunit B (476 aa).

The protein belongs to the GatB/GatE family. GatB subfamily. Heterotrimer of A, B and C subunits.

It carries out the reaction L-glutamyl-tRNA(Gln) + L-glutamine + ATP + H2O = L-glutaminyl-tRNA(Gln) + L-glutamate + ADP + phosphate + H(+). It catalyses the reaction L-aspartyl-tRNA(Asn) + L-glutamine + ATP + H2O = L-asparaginyl-tRNA(Asn) + L-glutamate + ADP + phosphate + 2 H(+). Functionally, allows the formation of correctly charged Asn-tRNA(Asn) or Gln-tRNA(Gln) through the transamidation of misacylated Asp-tRNA(Asn) or Glu-tRNA(Gln) in organisms which lack either or both of asparaginyl-tRNA or glutaminyl-tRNA synthetases. The reaction takes place in the presence of glutamine and ATP through an activated phospho-Asp-tRNA(Asn) or phospho-Glu-tRNA(Gln). This chain is Aspartyl/glutamyl-tRNA(Asn/Gln) amidotransferase subunit B, found in Bacillus velezensis (strain DSM 23117 / BGSC 10A6 / LMG 26770 / FZB42) (Bacillus amyloliquefaciens subsp. plantarum).